Consider the following 197-residue polypeptide: uncharacterized protein (197 aa).

The PfpI endopeptidase domain occupies 29–166; the sequence is DWSVHTVSLD…FTNLILEMID (138 aa). Catalysis depends on cysteine 98, which acts as the Nucleophile.

This sequence belongs to the peptidase C56 family.

This is an uncharacterized protein from Bacillus subtilis (strain 168).